The primary structure comprises 610 residues: Glutamine--fructose-6-phosphate aminotransferase [isomerizing] (610 aa).

Cys-2 serves as the catalytic Nucleophile; for GATase activity. One can recognise a Glutamine amidotransferase type-2 domain in the interval 2–219 (CGIVGATSER…EGDVADINRT (218 aa)). 2 SIS domains span residues 287–427 (AADI…YRGM) and 459–600 (LAQD…VDQP). Catalysis depends on Lys-605, which acts as the For Fru-6P isomerization activity.

Homodimer.

It localises to the cytoplasm. It carries out the reaction D-fructose 6-phosphate + L-glutamine = D-glucosamine 6-phosphate + L-glutamate. Functionally, catalyzes the first step in hexosamine metabolism, converting fructose-6P into glucosamine-6P using glutamine as a nitrogen source. The polypeptide is Glutamine--fructose-6-phosphate aminotransferase [isomerizing] (Idiomarina loihiensis (strain ATCC BAA-735 / DSM 15497 / L2-TR)).